A 42-amino-acid chain; its full sequence is Cytochrome b559 subunit beta (42 aa).

Residues 17 to 33 (WLTIHALAVPTVFFLGA) form a helical membrane-spanning segment. His21 is a heme binding site.

It belongs to the PsbE/PsbF family. In terms of assembly, heterodimer of an alpha subunit and a beta subunit. PSII is composed of 1 copy each of membrane proteins PsbA, PsbB, PsbC, PsbD, PsbE, PsbF, PsbH, PsbI, PsbJ, PsbK, PsbL, PsbM, PsbT, PsbX, PsbY, PsbZ, Psb30/Ycf12, at least 3 peripheral proteins of the oxygen-evolving complex and a large number of cofactors. It forms dimeric complexes. Requires heme b as cofactor.

The protein localises to the plastid. The protein resides in the chloroplast thylakoid membrane. Its function is as follows. This b-type cytochrome is tightly associated with the reaction center of photosystem II (PSII). PSII is a light-driven water:plastoquinone oxidoreductase that uses light energy to abstract electrons from H(2)O, generating O(2) and a proton gradient subsequently used for ATP formation. It consists of a core antenna complex that captures photons, and an electron transfer chain that converts photonic excitation into a charge separation. This chain is Cytochrome b559 subunit beta, found in Emiliania huxleyi (Coccolithophore).